Reading from the N-terminus, the 205-residue chain is MMLITTHSLLLLLLLLQLLQPLQFQEAYYEDFYFPAYRDKEDFEDFMVEFQSTGPTRPPTKEKVKRRILVNPGMPLGDSGYCNYQIMRKNVYYKYSCVTEHYFLLMQYDELQKTCYNRFVPCKNGIRKCNMSKKLVEGVYCNLTKASNIPLCQYNSFYRRGYVLITCTWQNEMQKLIPYTINDLVEPPEHTKSFLNEDGVFVVPP.

The signal sequence occupies residues 1 to 24 (MMLITTHSLLLLLLLLQLLQPLQF). Disulfide bonds link C97-C152, C115-C167, and C122-C129. 2 N-linked (GlcNAc...) asparagine glycosylation sites follow: N130 and N142.

It belongs to the pancreatic ribonuclease family.

It is found in the secreted. Its function is as follows. Does not exhibit any ribonuclease activity. The chain is Inactive ribonuclease-like protein 9 (RNASE9) from Cebus capucinus (White-faced sapajou).